A 111-amino-acid chain; its full sequence is Protein IDA-LIKE 5 (111 aa).

The signal sequence occupies residues 1–27 (MGNKRIKAMMILVVMIMMVFSWRICEA). The segment covering 46 to 56 (RRPNPRNHHHQ) has biased composition (basic residues). The segment at 46–65 (RRPNPRNHHHQNQGFNGDDY) is disordered.

Expressed mainly in flowers. Lower levels in buds and seedlings. Detected in vascular tissues and in hydathodes.

It localises to the secreted. The protein localises to the extracellular space. May be involved in floral abscission. The protein is Protein IDA-LIKE 5 (IDL5) of Arabidopsis thaliana (Mouse-ear cress).